We begin with the raw amino-acid sequence, 800 residues long: Internalin A (800 aa).

The signal sequence occupies residues 1–35 (MRKKRYVWLKSILVAILVFGSGVWINTSNGTNAQA). The region spanning 36–76 (ATITQDTPINQIFTDAALAEKMKTVLGKTNVTDTVSQTDLD) is the LRRNT domain. LRR repeat units lie at residues 77–98 (QVTT…EYLN), 99–120 (NLTQ…KDLT), 121–142 (KLVD…ANLT), 143–164 (NLTG…KNLT), 165–186 (NLNR…SGLT), 187–207 (NLQQ…ANLT), 208–229 (TLER…AKLT), 230–251 (NLES…GILT), 252–273 (NLDE…ASLT), 274–295 (NLTD…SGLT), 296–317 (KLTE…AGLT), 318–339 (ALTN…SNLK), 340–361 (NLTY…SSLT), 362–383 (KLQR…ANLT), and 384–405 (NINW…ANLT). The 90-residue stretch at 416–505 (AWTNAPVNYK…AIFNAKFHVD (90 aa)) folds into the LRRCT domain. One copy of the B-1 repeat lies at 518 to 587 (LLTEPAKPVK…TTSQTVDYQG (70 aa)). Residues 518 to 706 (LLTEPAKPVK…ITLYAQFTKN (189 aa)) form a 3 X approximate tandem repeats, type B region. The B-2 repeat unit spans residues 588–657 (LLQEPTPPTK…STTQAVDYQG (70 aa)). A B-3 repeat occupies 658–706 (LLKEPKAPTKAGYTFKGWYDEKTDGKKWDFATDKMPANDITLYAQFTKN). The tract at residues 705–757 (KNPVAPPTTGGNTPPTTNNGGNTTPPSANIPGSDTSNTSTGNSASTTSTMNAY) is disordered. The segment covering 711-753 (PTTGGNTPPTTNNGGNTTPPSANIPGSDTSNTSTGNSASTTST) has biased composition (low complexity). The LPXTG sorting signal motif lies at 767 to 771 (LPTTG). At Thr-770 the chain carries Pentaglycyl murein peptidoglycan amidated threonine. Residues 771–800 (GDSDNALYLLLGLLAVGTAMALTKKARASK) constitute a propeptide, removed by sortase A.

This sequence belongs to the internalin family.

It is found in the secreted. The protein localises to the cell wall. In terms of biological role, mediates the entry of Listeria monocytogenes into cells. Binds to host receptor cadherin-1 (E-cadherin, CDH1). In Listeria monocytogenes serotype 1/2a (strain 10403S), this protein is Internalin A (inlA).